A 317-amino-acid polypeptide reads, in one-letter code: Insulin-like growth factor-binding protein 2 (317 aa).

The first 33 residues, 1–33, serve as a signal peptide directing secretion; the sequence is MQPRLGGPALLLLPPLLLLLLLGAGGGDCGARA. The region spanning 35 to 126 is the IGFBP N-terminal domain; that stretch reads VLFRCPPCTP…VHGEGTCEKH (92 aa). 6 cysteine pairs are disulfide-bonded: cysteine 39/cysteine 76, cysteine 42/cysteine 78, cysteine 50/cysteine 79, cysteine 68/cysteine 82, cysteine 90/cysteine 103, and cysteine 97/cysteine 123. Disordered regions lie at residues 126-146 and 190-218; these read HGDAEYSASPEQVADNGEEHS and QHRQMGKGGKHHLGLEEPKKLRPPPARTP. One can recognise a Thyroglobulin type-1 domain in the interval 216–298; that stretch reads RTPCQQELDQ…APTIRGDPEC (83 aa). Cystine bridges form between cysteine 219/cysteine 253, cysteine 264/cysteine 275, and cysteine 277/cysteine 298. The short motif at 293-295 is the Cell attachment site element; it reads RGD.

Interacts with IGF1. Interacts with IGF2. Interacts (via RGD motif) with integrin alpha5/ITGA5; this interaction induces cell migration, adhesion or apoptosis according to the context. Interacts with PTPRB; this interaction leads to PTPRB dimerization and inactivation. Post-translationally, cleaved by MMP9 leading to release of free IGF2 from IGFBP2-IGF2 complex, which contributes to enhance the motility and the growth of astrocytes. O-glycosylated.

It localises to the secreted. Its function is as follows. Multifunctional protein that plays a critical role in regulating the availability of IGFs such as IGF1 and IGF2 to their receptors and thereby regulates IGF-mediated cellular processes including proliferation, differentiation, and apoptosis in a cell-type specific manner. Functions coordinately with receptor protein tyrosine phosphatase beta/PTPRB and the IGF1 receptor to regulate IGF1-mediated signaling by stimulating the phosphorylation of PTEN leading to its inactivation and AKT1 activation. Plays a positive role in cell migration via interaction with integrin alpha5/ITGA5 through an RGD motif. Additionally, interaction with ITGA5/ITGB1 enhances the adhesion of endothelial progenitor cells to endothelial cells. Upon mitochondrial damage, facilitates apoptosis with ITGA5 of podocytes, and then activates the phosphorylation of focal adhesion kinase (FAK)-mediated mitochondrial injury. The chain is Insulin-like growth factor-binding protein 2 (IGFBP2) from Bos taurus (Bovine).